A 269-amino-acid chain; its full sequence is Cytochrome c oxidase subunit 3 (269 aa).

The next 6 membrane-spanning stretches (helical) occupy residues 46–66 (NSYY…AFWF), 90–110 (GVIL…WAFF), 138–160 (PLLN…HSLI), 167–187 (ALYG…FQGV), 207–227 (FGTG…AVAL), and 247–267 (ILYW…IYYW).

The protein belongs to the cytochrome c oxidase subunit 3 family. Component of the cytochrome c oxidase (complex IV, CIV), a multisubunit enzyme composed of a catalytic core of 3 subunits and several supernumerary subunits. The complex exists as a monomer or a dimer and forms supercomplexes (SCs) in the inner mitochondrial membrane with ubiquinol-cytochrome c oxidoreductase (cytochrome b-c1 complex, complex III, CIII).

The protein resides in the mitochondrion inner membrane. The catalysed reaction is 4 Fe(II)-[cytochrome c] + O2 + 8 H(+)(in) = 4 Fe(III)-[cytochrome c] + 2 H2O + 4 H(+)(out). In terms of biological role, component of the cytochrome c oxidase, the last enzyme in the mitochondrial electron transport chain which drives oxidative phosphorylation. The respiratory chain contains 3 multisubunit complexes succinate dehydrogenase (complex II, CII), ubiquinol-cytochrome c oxidoreductase (cytochrome b-c1 complex, complex III, CIII) and cytochrome c oxidase (complex IV, CIV), that cooperate to transfer electrons derived from NADH and succinate to molecular oxygen, creating an electrochemical gradient over the inner membrane that drives transmembrane transport and the ATP synthase. Cytochrome c oxidase is the component of the respiratory chain that catalyzes the reduction of oxygen to water. Electrons originating from reduced cytochrome c in the intermembrane space (IMS) are transferred via the dinuclear copper A center (CU(A)) of subunit 2 and heme A of subunit 1 to the active site in subunit 1, a binuclear center (BNC) formed by heme A3 and copper B (CU(B)). The BNC reduces molecular oxygen to 2 water molecules using 4 electrons from cytochrome c in the IMS and 4 protons from the mitochondrial matrix. The sequence is that of Cytochrome c oxidase subunit 3 (COIII) from Podospora anserina (strain S / ATCC MYA-4624 / DSM 980 / FGSC 10383) (Pleurage anserina).